We begin with the raw amino-acid sequence, 206 residues long: Oligoribonuclease (206 aa).

An Exonuclease domain is found at 20–183; it reads LVWLDMEMTG…ADIHESIDEL (164 aa). Tyrosine 141 is a catalytic residue.

The protein belongs to the oligoribonuclease family.

The protein resides in the cytoplasm. In terms of biological role, 3'-to-5' exoribonuclease specific for small oligoribonucleotides. This chain is Oligoribonuclease, found in Burkholderia lata (strain ATCC 17760 / DSM 23089 / LMG 22485 / NCIMB 9086 / R18194 / 383).